A 668-amino-acid polypeptide reads, in one-letter code: UvrABC system protein C (668 aa).

The GIY-YIG domain maps to 14 to 91; the sequence is DSPGCYLHKD…IQRYKPKYNI (78 aa). A UVR domain is found at 196-231; sequence KKIVNELEAKMMVSSDNMEFEQAAEYRDVIKAIGTL.

This sequence belongs to the UvrC family. As to quaternary structure, interacts with UvrB in an incision complex.

It is found in the cytoplasm. The UvrABC repair system catalyzes the recognition and processing of DNA lesions. UvrC both incises the 5' and 3' sides of the lesion. The N-terminal half is responsible for the 3' incision and the C-terminal half is responsible for the 5' incision. The chain is UvrABC system protein C from Lactococcus lactis subsp. lactis (strain IL1403) (Streptococcus lactis).